A 313-amino-acid polypeptide reads, in one-letter code: Pyrimidine-specific ribonucleoside hydrolase RihB (313 aa).

Aspartate 11 serves as the catalytic Proton acceptor. 3 residues coordinate Ca(2+): aspartate 11, aspartate 16, and valine 124. Residues glutamine 227 and histidine 239 each contribute to the substrate site. Aspartate 240 provides a ligand contact to Ca(2+).

It belongs to the IUNH family. RihB subfamily. In terms of assembly, homotetramer. Requires Ca(2+) as cofactor.

The enzyme catalyses a pyrimidine ribonucleoside + H2O = a pyrimidine nucleobase + D-ribose. In terms of biological role, hydrolyzes cytidine or uridine to ribose and cytosine or uracil, respectively. Has a clear preference for cytidine over uridine. Strictly specific for ribonucleosides. The chain is Pyrimidine-specific ribonucleoside hydrolase RihB from Escherichia coli (strain SE11).